We begin with the raw amino-acid sequence, 367 residues long: Ferrochelatase (367 aa).

Residues H213 and E294 each coordinate Fe cation.

This sequence belongs to the ferrochelatase family.

It localises to the cytoplasm. It catalyses the reaction heme b + 2 H(+) = protoporphyrin IX + Fe(2+). The protein operates within porphyrin-containing compound metabolism; protoheme biosynthesis; protoheme from protoporphyrin-IX: step 1/1. Catalyzes the ferrous insertion into protoporphyrin IX. This is Ferrochelatase from Polaromonas sp. (strain JS666 / ATCC BAA-500).